The following is a 286-amino-acid chain: ATP synthase gamma chain (286 aa).

The protein belongs to the ATPase gamma chain family. F-type ATPases have 2 components, CF(1) - the catalytic core - and CF(0) - the membrane proton channel. CF(1) has five subunits: alpha(3), beta(3), gamma(1), delta(1), epsilon(1). CF(0) has three main subunits: a, b and c.

It is found in the cell inner membrane. Its function is as follows. Produces ATP from ADP in the presence of a proton gradient across the membrane. The gamma chain is believed to be important in regulating ATPase activity and the flow of protons through the CF(0) complex. This chain is ATP synthase gamma chain, found in Shewanella frigidimarina (strain NCIMB 400).